The following is a 253-amino-acid chain: Zinc import ATP-binding protein ZnuC (253 aa).

The region spanning 6–227 (VTLNKISVTF…FGNRGAEQLA (222 aa)) is the ABC transporter domain. 38–45 (GPNGAGKS) contributes to the ATP binding site.

It belongs to the ABC transporter superfamily. Zinc importer (TC 3.A.1.15.5) family. As to quaternary structure, the complex is composed of two ATP-binding proteins (ZnuC), two transmembrane proteins (ZnuB) and a solute-binding protein (ZnuA).

The protein resides in the cell inner membrane. The catalysed reaction is Zn(2+)(out) + ATP(in) + H2O(in) = Zn(2+)(in) + ADP(in) + phosphate(in) + H(+)(in). In terms of biological role, part of the ABC transporter complex ZnuABC involved in zinc import. Responsible for energy coupling to the transport system. This Yersinia pseudotuberculosis serotype I (strain IP32953) protein is Zinc import ATP-binding protein ZnuC.